The primary structure comprises 73 residues: Small, acid-soluble spore protein C2 (73 aa).

The protein belongs to the alpha/beta-type SASP family.

SASP are bound to spore DNA. They are double-stranded DNA-binding proteins that cause DNA to change to an a-like conformation. They protect the DNA backbone from chemical and enzymatic cleavage and are thus involved in dormant spore's high resistance to UV light. In Priestia megaterium (Bacillus megaterium), this protein is Small, acid-soluble spore protein C2 (SASP-C2).